A 384-amino-acid chain; its full sequence is Large ribosomal subunit protein uL3m (384 aa).

Disordered regions lie at residues 80-101 (NQVTQGLPAPTSGPAAALKRRE) and 237-262 (QEASHGNSLNHRTIGSVGGSQGSGSR). Residues 240–249 (SHGNSLNHRT) show a composition bias toward polar residues.

The protein belongs to the universal ribosomal protein uL3 family. In terms of assembly, component of the mitochondrial large ribosomal subunit (mt-LSU). Mature N.crassa 74S mitochondrial ribosomes consist of a small (37S) and a large (54S) subunit. The 37S small subunit contains a 16S ribosomal RNA (16S mt-rRNA) and 32 different proteins. The 54S large subunit contains a 23S rRNA (23S mt-rRNA) and 42 different proteins.

Its subcellular location is the mitochondrion. In terms of biological role, component of the mitochondrial ribosome (mitoribosome), a dedicated translation machinery responsible for the synthesis of mitochondrial genome-encoded proteins, including at least some of the essential transmembrane subunits of the mitochondrial respiratory chain. The mitoribosomes are attached to the mitochondrial inner membrane and translation products are cotranslationally integrated into the membrane. This Neurospora crassa (strain ATCC 24698 / 74-OR23-1A / CBS 708.71 / DSM 1257 / FGSC 987) protein is Large ribosomal subunit protein uL3m (mrpl9).